A 761-amino-acid polypeptide reads, in one-letter code: Ribonucleoside-diphosphate reductase 1 subunit alpha (761 aa).

Positions 5 to 95 (LLVTKRDGRT…IFHLRKKAFG (91 aa)) constitute an ATP-cone domain. Residues Lys9, 15 to 21 (ERINLDK), Thr55, and Lys91 each bind ATP. Thr209 provides a ligand contact to GDP. Residues Cys225 and Cys462 are joined by a disulfide bond. Residues 232–234 (DSL), Arg262, and Arg269 each bind dTTP. A GDP-binding site is contributed by Asn437. Asn437 (proton acceptor) is an active-site residue. Residue Cys439 is the Cysteine radical intermediate of the active site. GDP contacts are provided by residues Glu441 and 623 to 625 (ETS). Glu441 functions as the Proton acceptor in the catalytic mechanism.

Belongs to the ribonucleoside diphosphate reductase large chain family. Tetramer of two alpha (R1) and two beta (R2) subunits. The B1 protein is a dimer of alpha subunits. A radical transfer pathway occurs between 'Tyr-122' of R2 and R1.

It catalyses the reaction a 2'-deoxyribonucleoside 5'-diphosphate + [thioredoxin]-disulfide + H2O = a ribonucleoside 5'-diphosphate + [thioredoxin]-dithiol. Under complex allosteric control mediated by deoxynucleoside triphosphates and ATP binding to separate specificity and activation sites on the alpha subunit. The type of nucleotide bound at the specificity site determines substrate preference. It seems probable that ATP makes the enzyme reduce CDP and UDP, dGTP favors ADP reduction and dTTP favors GDP reduction. Stimulated by ATP and inhibited by dATP binding to the activity site. In terms of biological role, provides the precursors necessary for DNA synthesis. Catalyzes the biosynthesis of deoxyribonucleotides from the corresponding ribonucleotides. R1 contains the binding sites for both substrates and allosteric effectors and carries out the actual reduction of the ribonucleotide. This chain is Ribonucleoside-diphosphate reductase 1 subunit alpha (nrdA), found in Salmonella typhimurium (strain LT2 / SGSC1412 / ATCC 700720).